The following is a 249-amino-acid chain: Probable septum site-determining protein MinC (249 aa).

The disordered stretch occupies residues alanine 116–alanine 149. Pro residues predominate over residues serine 119–arginine 130. Low complexity predominate over residues alanine 131–proline 142.

It belongs to the MinC family. In terms of assembly, interacts with MinD and FtsZ.

In terms of biological role, cell division inhibitor that blocks the formation of polar Z ring septums. Rapidly oscillates between the poles of the cell to destabilize FtsZ filaments that have formed before they mature into polar Z rings. Prevents FtsZ polymerization. The polypeptide is Probable septum site-determining protein MinC (Xanthomonas campestris pv. campestris (strain ATCC 33913 / DSM 3586 / NCPPB 528 / LMG 568 / P 25)).